Reading from the N-terminus, the 277-residue chain is Glycerol-3-phosphate acyltransferase (277 aa).

5 consecutive transmembrane segments (helical) span residues 3 to 23, 55 to 75, 79 to 99, 111 to 131, and 155 to 175; these read LFIFLILVGYLMGSINSAIIV, IMVMVFDALKGILPVILAKLL, PVTVAFTALAAVVGHMYPVFF, IGALLAFHFVIGVMVAATWLL, and LILVGNLNIFPPLFMITILVL. The tract at residues 207–277 is disordered; it reads SPATSAEQEF…PKTKTVKEKE (71 aa). A compositionally biased stretch (basic and acidic residues) spans 216–239; the sequence is FPGKEVIDTNIDETEKTEQAEAVK. Basic residues-rich tracts occupy residues 240–253 and 262–271; these read KPKAKKATTKAKKT and KPRSTKPKTK.

This sequence belongs to the PlsY family. Probably interacts with PlsX.

The protein localises to the cell inner membrane. It catalyses the reaction an acyl phosphate + sn-glycerol 3-phosphate = a 1-acyl-sn-glycero-3-phosphate + phosphate. It functions in the pathway lipid metabolism; phospholipid metabolism. Its function is as follows. Catalyzes the transfer of an acyl group from acyl-phosphate (acyl-PO(4)) to glycerol-3-phosphate (G3P) to form lysophosphatidic acid (LPA). This enzyme utilizes acyl-phosphate as fatty acyl donor, but not acyl-CoA or acyl-ACP. This chain is Glycerol-3-phosphate acyltransferase, found in Legionella pneumophila (strain Paris).